The chain runs to 181 residues: ATP synthase subunit delta (181 aa).

Belongs to the ATPase delta chain family. F-type ATPases have 2 components, F(1) - the catalytic core - and F(0) - the membrane proton channel. F(1) has five subunits: alpha(3), beta(3), gamma(1), delta(1), epsilon(1). F(0) has three main subunits: a(1), b(2) and c(10-14). The alpha and beta chains form an alternating ring which encloses part of the gamma chain. F(1) is attached to F(0) by a central stalk formed by the gamma and epsilon chains, while a peripheral stalk is formed by the delta and b chains.

The protein resides in the cell inner membrane. Functionally, f(1)F(0) ATP synthase produces ATP from ADP in the presence of a proton or sodium gradient. F-type ATPases consist of two structural domains, F(1) containing the extramembraneous catalytic core and F(0) containing the membrane proton channel, linked together by a central stalk and a peripheral stalk. During catalysis, ATP synthesis in the catalytic domain of F(1) is coupled via a rotary mechanism of the central stalk subunits to proton translocation. Its function is as follows. This protein is part of the stalk that links CF(0) to CF(1). It either transmits conformational changes from CF(0) to CF(1) or is implicated in proton conduction. The sequence is that of ATP synthase subunit delta from Chlorobium phaeovibrioides (strain DSM 265 / 1930) (Prosthecochloris vibrioformis (strain DSM 265)).